The chain runs to 571 residues: Proline--tRNA ligase (571 aa).

It belongs to the class-II aminoacyl-tRNA synthetase family. ProS type 1 subfamily. Homodimer.

It localises to the cytoplasm. It catalyses the reaction tRNA(Pro) + L-proline + ATP = L-prolyl-tRNA(Pro) + AMP + diphosphate. Its function is as follows. Catalyzes the attachment of proline to tRNA(Pro) in a two-step reaction: proline is first activated by ATP to form Pro-AMP and then transferred to the acceptor end of tRNA(Pro). As ProRS can inadvertently accommodate and process non-cognate amino acids such as alanine and cysteine, to avoid such errors it has two additional distinct editing activities against alanine. One activity is designated as 'pretransfer' editing and involves the tRNA(Pro)-independent hydrolysis of activated Ala-AMP. The other activity is designated 'posttransfer' editing and involves deacylation of mischarged Ala-tRNA(Pro). The misacylated Cys-tRNA(Pro) is not edited by ProRS. This is Proline--tRNA ligase from Azotobacter vinelandii (strain DJ / ATCC BAA-1303).